The primary structure comprises 202 residues: MSKIKLTKNDLKKQKDELKMFKRYLPTLQLKKQQLYMEIVKIENSYKIKNLEQQKLKENISNWISLFSEKFPFESWIQVKTVVKKSLNIAGVAIPIFDSIEYEDIRHDLLFTPYWVDKGIEILKVVIQIDVELKILKKQIDLLLREFRITSQRVNLFEKVMIPTAKANIKKINIYLGDQQTAAVVRGKIAKSSLIKKNRNSL.

The protein belongs to the V-ATPase D subunit family.

Its function is as follows. Produces ATP from ADP in the presence of a proton gradient across the membrane. This is V-type ATP synthase subunit D (atpD) from Borreliella burgdorferi (strain ATCC 35210 / DSM 4680 / CIP 102532 / B31) (Borrelia burgdorferi).